The chain runs to 554 residues: Intraflagellar transport protein 56 (554 aa).

Positions 1–27 are disordered; sequence MMLSRAKPAVGGESPHTDKRKKKGRKI. Positions 18-27 are enriched in basic residues; it reads DKRKKKGRKI. 4 TPR repeats span residues 57–90, 92–125, 151–184, and 468–501; these read EDTN…ENCN, EVWV…LQNR, KEDQ…NREY, and ANDC…EGKR.

It belongs to the IFT56 family. As to quaternary structure, component of the IFT complex B. Interacts with IFT46; the interaction is direct.

Its subcellular location is the cell projection. The protein localises to the cilium. Its function is as follows. Component of the intraflagellar transport (IFT) complex B required for transport of proteins in the motile cilium. Required for transport of specific ciliary cargo proteins related to motility, while it is neither required for IFT complex B assembly or motion nor for cilium assembly. Required for efficient coupling between the accumulation of GLI2 and GLI3 at the ciliary tips and their dissociation from the negative regulator SUFU. Plays a key role in maintaining the integrity of the IFT complex B and the proper ciliary localization of the IFT complex B components. Not required for IFT complex A ciliary localization or function. Essential for maintaining proper microtubule organization within the ciliary axoneme. The protein is Intraflagellar transport protein 56 of Rattus norvegicus (Rat).